We begin with the raw amino-acid sequence, 396 residues long: MSHAIDELQAIIAELKVELEEQKTSNRQARSRIDRMSAEVVDSNPYSRLMALQRMNIVKEYERIRDKAVAVVGVGGVGSVTADMLTRCGIGKLILFDYDKVELANMNRLFFTPDQAGLSKVEAAARTLNFINPDVQIETHNYNITTVDNFDRFLATITESGKELGQPVDLVLSCVDNFEARMAINAACNERNLNWFESGVSENAVSGHIQFIRPGDTACFACAPPLVVAENIDEKTLKREGVCAASLPTTMGITAGFLVQNALKYLLNFGEVSDYLGYNALNDFFPRMTLKPNPQCDDRNCLLRQKEFQARPKPIEVKEDVSSSDEPLHATNEWGIELVADDEPVNCPEPAKSSAVVQGLKLAYEAPEKEKVEEENVATVSDETSLEDLMAQMKSM.

G76, D97, K120, N143, and N177 together coordinate ATP. The Zn(2+) site is built by C219 and C222. C243 acts as the Glycyl thioester intermediate in catalysis. Residues C296 and C301 each coordinate Zn(2+).

Belongs to the ubiquitin-activating E1 family. UBA5 subfamily.

E1-like enzyme which activates UFM1. The protein is Ubiquitin-like modifier-activating enzyme 5 of Drosophila ananassae (Fruit fly).